The primary structure comprises 971 residues: MASNNVAQFAAELKMPAGVLLEQLQAAGVQKASEDDALSEADKARLLDHLRKSHGATDGDKRKITLTRKHTSEIKQSDATGKARTIQVEVRKKRTFVKRDDVSEGAEQGQAQVAEADDDAELKRREEEARREAELLEKQAQELRERQERLEREEAERRAREEAAEAERRRAEEEAAAKRAAAEAAAAQQAAAQQAAAEQETAPTQSAQDEARAAAERAAQREAAKKAEDAAREAADKARAEQEEISKRRAAAEAEARAIREMMNTPRKAVVKAAEPPKPAEPAKPAEAKGTLHKPAKPEGAQARPAVKKPAGAAAPATTQAPAGAGDRNKKPGAGKGGWQDDASKRRGIKTRGDSSGGVDRGWRGGPKGRGRHQDSASSFQAPTEPIVREVHVPETVSVADLAHKMSIKASEVIKVMMKMGQMVTINQVLDQETAMIIVEELGHRAVAAKLDDPEALLVEGETGTDAEQLPRPPVVTVMGHVDHGKTSLLDHIRRAKVAAGEAGGITQHIGAYHVDTPRGVITFLDTPGHEAFTAMRARGAKATDIVVLVVAADDGVMPQTKEAIAHAKAGGVPIVVAINKIDKPEANPDRVKQELVAEGVVPEEYGGDSPFVPVSAKTGAGIDDLLENVLLQAEVLELKAPVEAPAKGIVIEAKLDKGKGPVATILVQSGTLNRGDIVLAGTAYGRVRAMLDENGKPTKEAGPSIPVEIQGLSEVPGAGEEVIVLPDERKAREIALFRQGKFRDVKLAKQQAAKLESMLEQMGEGEVQNLPLIIKADVQGSQEALVQSLLKLSTDEVRVQIVHSAVGGISENDVNLATASKAVIIGFNTRADAQARKLAEANGIDIRYYNIIYDAVDEVKAAMSGMLAPEKREVITGMVEVRQVFKVPKVGTVAGCMVTDGIVKRSSSVRVLRNNVVIFTGELESLKRFKDDVKEVKQGFECGMSVKNFNDIIEGDQFEVFEVTEVARTL.

The segment covering 49–63 has biased composition (basic and acidic residues); it reads HLRKSHGATDGDKRK. 2 disordered regions span residues 49 to 85 and 99 to 386; these read HLRK…KART and RDDV…PTEP. Low complexity predominate over residues 105-114; the sequence is GAEQGQAQVA. Residues 121-181 are compositionally biased toward basic and acidic residues; it reads ELKRREEEAR…EEEAAAKRAA (61 aa). Over residues 182 to 200 the composition is skewed to low complexity; it reads AEAAAAQQAAAQQAAAEQE. A compositionally biased stretch (basic and acidic residues) spans 209–260; it reads DEARAAAERAAQREAAKKAEDAAREAADKARAEQEEISKRRAAAEAEARAIR. Positions 303–325 are enriched in low complexity; sequence ARPAVKKPAGAAAPATTQAPAGA. The span at 355-368 shows a compositional bias: gly residues; it reads SSGGVDRGWRGGPK. A tr-type G domain is found at 471–640; sequence PRPPVVTVMG…LLQAEVLELK (170 aa). Residues 480 to 487 form a G1 region; the sequence is GHVDHGKT. Position 480–487 (480–487) interacts with GTP; that stretch reads GHVDHGKT. Positions 505–509 are G2; sequence GITQH. The G3 stretch occupies residues 526–529; it reads DTPG. Residues 526 to 530 and 580 to 583 contribute to the GTP site; these read DTPGH and NKID. Positions 580–583 are G4; the sequence is NKID. Residues 616-618 form a G5 region; that stretch reads SAK.

This sequence belongs to the TRAFAC class translation factor GTPase superfamily. Classic translation factor GTPase family. IF-2 subfamily.

It localises to the cytoplasm. In terms of biological role, one of the essential components for the initiation of protein synthesis. Protects formylmethionyl-tRNA from spontaneous hydrolysis and promotes its binding to the 30S ribosomal subunits. Also involved in the hydrolysis of GTP during the formation of the 70S ribosomal complex. This is Translation initiation factor IF-2 from Burkholderia cenocepacia (strain ATCC BAA-245 / DSM 16553 / LMG 16656 / NCTC 13227 / J2315 / CF5610) (Burkholderia cepacia (strain J2315)).